We begin with the raw amino-acid sequence, 197 residues long: Phosphoheptose isomerase (197 aa).

An SIS domain is found at 37 to 197; that stretch reads MLQCLMNDGK…CIDSVLLEGM (161 aa). A substrate-binding site is contributed by 52–54; sequence NGG. Zn(2+) is bound by residues His-61 and Glu-65. Substrate contacts are provided by residues Glu-65, 94 to 95, 120 to 122, Ser-125, and Gln-175; these read ND and STS. Zn(2+) contacts are provided by Gln-175 and His-183.

The protein belongs to the SIS family. GmhA subfamily. In terms of assembly, homotetramer. Requires Zn(2+) as cofactor.

The protein localises to the cytoplasm. The enzyme catalyses 2 D-sedoheptulose 7-phosphate = D-glycero-alpha-D-manno-heptose 7-phosphate + D-glycero-beta-D-manno-heptose 7-phosphate. It participates in carbohydrate biosynthesis; D-glycero-D-manno-heptose 7-phosphate biosynthesis; D-glycero-alpha-D-manno-heptose 7-phosphate and D-glycero-beta-D-manno-heptose 7-phosphate from sedoheptulose 7-phosphate: step 1/1. In terms of biological role, catalyzes the isomerization of sedoheptulose 7-phosphate in D-glycero-D-manno-heptose 7-phosphate. This chain is Phosphoheptose isomerase, found in Neisseria meningitidis serogroup C / serotype 2a (strain ATCC 700532 / DSM 15464 / FAM18).